A 436-amino-acid polypeptide reads, in one-letter code: UDP-N-acetylmuramate--L-alanine ligase (436 aa).

108-114 (GAHGKTS) is an ATP binding site.

This sequence belongs to the MurCDEF family.

It localises to the cytoplasm. The enzyme catalyses UDP-N-acetyl-alpha-D-muramate + L-alanine + ATP = UDP-N-acetyl-alpha-D-muramoyl-L-alanine + ADP + phosphate + H(+). Its pathway is cell wall biogenesis; peptidoglycan biosynthesis. Its function is as follows. Cell wall formation. This Bacillus cereus (strain ZK / E33L) protein is UDP-N-acetylmuramate--L-alanine ligase.